Here is a 721-residue protein sequence, read N- to C-terminus: uncharacterized protein (721 aa).

Residues 6 to 26 (QLIFVNFYVILIIWWFVMGIL) form a helical membrane-spanning segment. An ATP-binding site is contributed by 308–315 (GGTGSGKT).

The protein belongs to the GSP E family. This protein undergoes a protein self splicing that involves a post-translational excision of the intervening region (intein) followed by peptide ligation.

The protein resides in the membrane. This is an uncharacterized protein from Methanocaldococcus jannaschii (strain ATCC 43067 / DSM 2661 / JAL-1 / JCM 10045 / NBRC 100440) (Methanococcus jannaschii).